The following is a 552-amino-acid chain: Gamma-aminobutyric acid receptor subunit alpha-4 (552 aa).

The N-terminal stretch at 1–35 (MVSVQKVPAIVLCSGVSLALLHVLCLATCLNESPG) is a signal peptide. The Extracellular segment spans residues 36–259 (QNSKDEKLCP…FHLRRKMGYF (224 aa)). Asparagine 47 is a glycosylation site (N-linked (GlcNAc...) asparagine). Arginine 100 contributes to the 4-aminobutanoate binding site. N-linked (GlcNAc...) asparagine glycosylation is found at asparagine 144 and asparagine 157. Threonine 163 provides a ligand contact to 4-aminobutanoate. Cysteine 172 and cysteine 186 are oxidised to a cystine. A helical membrane pass occupies residues 260-280 (MIQTYIPCIMTVILSQVSFWI). Topologically, residues 281–284 (NKES) are cytoplasmic. Residues 285–305 (VPARTVFGITTVLTMTTLSIS) form a helical membrane-spanning segment. The Extracellular segment spans residues 306–318 (ARHSLPKVSYATA). Residues 319 to 341 (MDWFIAVCFAFVFSALIEFAAVN) form a helical membrane-spanning segment. The Cytoplasmic segment spans residues 342–515 (YFTNIQMQKA…PPPSGSGTSK (174 aa)). Disordered regions lie at residues 353–436 (KKIS…NPFS), 448–470 (ARGL…PLRS), and 486–513 (TTVN…GSGT). The segment covering 403–423 (RTEVGNHSSKTTAAQESSETT) has biased composition (polar residues). Composition is skewed to low complexity over residues 448-458 (ARGLSSAASPS) and 486-499 (TTVN…NVSA). A compositionally biased stretch (pro residues) spans 500-509 (TPPPSAPPPS). A helical transmembrane segment spans residues 516 to 538 (IDKYARILFPVTFGAFNMVYWVV). The Extracellular portion of the chain corresponds to 539–552 (YLSKDTMEKSESLM).

This sequence belongs to the ligand-gated ion channel (TC 1.A.9) family. Gamma-aminobutyric acid receptor (TC 1.A.9.5) subfamily. GABRA4 sub-subfamily. In terms of assembly, heteropentamer, formed by a combination of alpha (GABRA1-6), beta (GABRB1-3), gamma (GABRG1-3), delta (GABRD), epsilon (GABRE), rho (GABRR1-3), pi (GABRP) and theta (GABRQ) chains, each subunit exhibiting distinct physiological and pharmacological properties. In terms of tissue distribution, expressed in the brain.

Its subcellular location is the cell membrane. It localises to the postsynaptic cell membrane. Potentiated by histamine. Its function is as follows. Alpha subunit of the heteropentameric ligand-gated chloride channel gated by gamma-aminobutyric acid (GABA), a major inhibitory neurotransmitter in the brain. GABA-gated chloride channels, also named GABA(A) receptors (GABAAR), consist of five subunits arranged around a central pore and contain GABA active binding site(s) located at the alpha and beta subunit interface(s). Alpha-4/GABRA4 subunit often assembles with delta or gamma-2 subunits, in combination with beta subunits. When activated by GABA, GABAARs selectively allow the flow of chloride anions across the cell membrane down their electrochemical gradient. GABAARs containing alpha-4 are predominantly extrasynaptic, contributing to tonic inhibition in dentate granule cells and thalamic relay neurons. Extrasynaptic alpha-4-containing GABAARs control levels of excitability and network activity. GABAAR containing alpha-4-beta-3-delta subunits can simultaneously bind GABA and histamine where histamine binds at the interface of two neighboring beta subunits, which may be involved in the regulation of sleep and wakefulness. The sequence is that of Gamma-aminobutyric acid receptor subunit alpha-4 from Rattus norvegicus (Rat).